The primary structure comprises 471 residues: Putative multidrug resistance protein MdtD (471 aa).

Residues 1 to 12 (MTDLPDSTRWQL) are Periplasmic-facing. A helical transmembrane segment spans residues 13 to 33 (WIVAFGFFMQSLDTTIVNTAI). Topologically, residues 34–48 (PSMAQSLGESPLHMH) are cytoplasmic. A helical transmembrane segment spans residues 49–69 (MVIVSYVLTVAVMLPASGWLA). At 70–76 (DKVGVRN) the chain is on the periplasmic side. Residues 77–97 (IFFTAIVLFTLGSLFCALSGT) form a helical membrane-spanning segment. Over 98-101 (LNEL) the chain is Cytoplasmic. A helical transmembrane segment spans residues 102-124 (LLARALQGVGGAMMVPVGRLTVM). Residues 125–137 (KIVPREQYMAAMT) are Periplasmic-facing. The chain crosses the membrane as a helical span at residues 138-158 (FVTLPGQVGPLLGPALGGLLV). The Cytoplasmic segment spans residues 159-164 (EYASWH). The chain crosses the membrane as a helical span at residues 165–185 (WIFLINIPVGIIGAIATLMLM). The Periplasmic segment spans residues 186–196 (PNYTMQTRRFD). Residues 197-217 (LSGFLLLAVGMAVLTLALDGS) traverse the membrane as a helical segment. The Cytoplasmic segment spans residues 218–224 (KGTGLSP). Residues 225–245 (LAIAGLVAVGVVALVLYLLHA) traverse the membrane as a helical segment. The Periplasmic segment spans residues 246–262 (RNNNRALFSLKLFRTRT). The chain crosses the membrane as a helical span at residues 263–283 (FSLGLAGSFAGRIGSGMLPFM). Residues 284–285 (TP) lie on the Cytoplasmic side of the membrane. A helical membrane pass occupies residues 286–306 (VFLQIGLGFSPFHAGLMMIPM). Over 307–341 (VLGSMGMKRIVVQVVNRFGYRRVLVATTLGLSLVT) the chain is Periplasmic. The chain crosses the membrane as a helical span at residues 342–362 (LLFMTTALLGWYYVLPFVLFL). Residues 363 to 395 (QGMVNSTRFSSMNTLTLKDLPDNLASSGNSLLS) lie on the Cytoplasmic side of the membrane. Residues 396–416 (MIMQLSMSIGVTIAGLLLGLF) form a helical membrane-spanning segment. At 417–430 (GSQHVSVDSGTTQT) the chain is on the periplasmic side. A helical transmembrane segment spans residues 431–451 (VFMYTWLSMAFIIALPAFIFA). Topologically, residues 452-471 (RVPNDTHQNVAISRRKRSAQ) are cytoplasmic.

Belongs to the major facilitator superfamily. TCR/Tet family.

The protein localises to the cell inner membrane. This is Putative multidrug resistance protein MdtD from Shigella flexneri serotype 5b (strain 8401).